A 354-amino-acid polypeptide reads, in one-letter code: Neutral protease 2 homolog SNOG_02177 (354 aa).

Positions 1-19 are cleaved as a signal peptide; the sequence is MKFQILSVAALASLASAVS. Positions 20–182 are excised as a propeptide; it reads DALDKRDSPL…WIDLAKRTIV (163 aa). Intrachain disulfides connect Cys186/Cys257 and Cys264/Cys282. The N-linked (GlcNAc...) asparagine glycan is linked to Asn214. A Zn(2+)-binding site is contributed by His306. Glu307 is an active-site residue. His310 contributes to the Zn(2+) binding site.

The protein belongs to the peptidase M35 family. Zn(2+) is required as a cofactor.

The protein resides in the secreted. It carries out the reaction Preferential cleavage of bonds with hydrophobic residues in P1'. Also 3-Asn-|-Gln-4 and 8-Gly-|-Ser-9 bonds in insulin B chain.. In terms of biological role, secreted metalloproteinase that allows assimilation of proteinaceous substrates. Shows high activities on basic nuclear substrates such as histone and protamine. In Phaeosphaeria nodorum (strain SN15 / ATCC MYA-4574 / FGSC 10173) (Glume blotch fungus), this protein is Neutral protease 2 homolog SNOG_02177.